A 104-amino-acid chain; its full sequence is MRFFSYLGLLLAGLTSLQGFSTDNLLEEELRYWCQYVKNCRFCWTCQDGLCKNKVLKDMSSVQEHSYPMKHCMIHRQCKYIRDGPIFQVECTIQTSDATHLINA.

The first 31 residues, 1–31, serve as a signal peptide directing secretion; that stretch reads MRFFSYLGLLLAGLTSLQGFSTDNLLEEELR.

It belongs to the asfivirus MGF 110 family.

Its function is as follows. Plays a role in virus cell tropism, and may be required for efficient virus replication in macrophages. In African swine fever virus (isolate Pig/Portugal/OURT88/1988) (ASFV), this protein is Protein MGF 110-2L.